Here is a 379-residue protein sequence, read N- to C-terminus: Queuine tRNA-ribosyltransferase (379 aa).

Aspartate 91 functions as the Proton acceptor in the catalytic mechanism. Substrate contacts are provided by residues 91–95 (DSGGF), aspartate 145, glutamine 189, and glycine 216. The segment at 247 to 253 (GVGKPED) is RNA binding. The Nucleophile role is filled by aspartate 266. Residues 271-275 (TRNAR) are RNA binding; important for wobble base 34 recognition. Zn(2+) contacts are provided by cysteine 304, cysteine 306, cysteine 309, and histidine 335.

This sequence belongs to the queuine tRNA-ribosyltransferase family. Homodimer. Within each dimer, one monomer is responsible for RNA recognition and catalysis, while the other monomer binds to the replacement base PreQ1. It depends on Zn(2+) as a cofactor.

It catalyses the reaction 7-aminomethyl-7-carbaguanine + guanosine(34) in tRNA = 7-aminomethyl-7-carbaguanosine(34) in tRNA + guanine. Its pathway is tRNA modification; tRNA-queuosine biosynthesis. Functionally, catalyzes the base-exchange of a guanine (G) residue with the queuine precursor 7-aminomethyl-7-deazaguanine (PreQ1) at position 34 (anticodon wobble position) in tRNAs with GU(N) anticodons (tRNA-Asp, -Asn, -His and -Tyr). Catalysis occurs through a double-displacement mechanism. The nucleophile active site attacks the C1' of nucleotide 34 to detach the guanine base from the RNA, forming a covalent enzyme-RNA intermediate. The proton acceptor active site deprotonates the incoming PreQ1, allowing a nucleophilic attack on the C1' of the ribose to form the product. After dissociation, two additional enzymatic reactions on the tRNA convert PreQ1 to queuine (Q), resulting in the hypermodified nucleoside queuosine (7-(((4,5-cis-dihydroxy-2-cyclopenten-1-yl)amino)methyl)-7-deazaguanosine). The sequence is that of Queuine tRNA-ribosyltransferase from Vibrio cholerae serotype O1 (strain ATCC 39315 / El Tor Inaba N16961).